The sequence spans 1901 residues: Methylcytosine dioxygenase tet3 (1901 aa).

Residues 58–99 form a CXXC-type zinc finger; that stretch reads SNKKRKRCGVCVPCLRKEPCGACYNCVNRSTSHQICKMRKCE. Zn(2+)-binding residues include cysteine 65, cysteine 68, cysteine 71, cysteine 77, cysteine 80, cysteine 83, cysteine 93, and cysteine 98. Disordered regions lie at residues 434–455, 602–658, 751–787, and 808–867; these read KNAL…KKSS, WWVP…EGSA, KDQC…QNDL, and DFSL…PVSR. Polar residues-rich tracts occupy residues 442–455 and 602–614; these read SPRQ…KKSS and WWVP…PVSK. The span at 640-652 shows a compositional bias: basic residues; the sequence is KPQRKQVQIKKPK. A compositionally biased stretch (low complexity) spans 758–771; it reads STHDTSSSSGQGDS. Over residues 847–867 the composition is skewed to polar residues; the sequence is ENSTKPATHSNPALSNNPVSR. Zn(2+) is bound by residues cysteine 957, cysteine 959, cysteine 1017, histidine 1043, and cysteine 1045. Arginine 1085 contacts 2-oxoglutarate. Zn(2+) is bound by residues cysteine 1095, cysteine 1097, cysteine 1113, cysteine 1122, and cysteine 1182. Residue cysteine 1198 coordinates 2-oxoglutarate. Histidine 1204 lines the Zn(2+) pocket. Histidine 1206 and aspartate 1208 together coordinate Fe cation. Histidine 1240 contributes to the 2-oxoglutarate binding site. Disordered stretches follow at residues 1282 to 1338, 1457 to 1501, 1591 to 1624, and 1680 to 1745; these read SEPA…QQTK, YGSE…VETT, SNAP…PGKV, and SATP…DEEI. Residues 1291–1325 show a composition bias toward basic and acidic residues; the sequence is RQLEAKKAAAEKKKLQKEKLVSPDKTKQEPSDKKT. The span at 1326–1338 shows a compositional bias: polar residues; sequence CQQNPGVPQQQTK. A compositionally biased stretch (basic and acidic residues) spans 1465–1474; it reads SFRRSSEVPH. The segment covering 1477 to 1487 has biased composition (polar residues); that stretch reads SLQNPSSQKSV. Polar residues-rich tracts occupy residues 1680–1693 and 1702–1719; these read SATP…TPCS and SFPN…SQNH. Fe cation is bound at residue histidine 1780. Position 1795 to 1797 (1795 to 1797) interacts with 2-oxoglutarate; it reads RIS.

This sequence belongs to the TET family. Fe(2+) is required as a cofactor. Zn(2+) serves as cofactor.

It is found in the nucleus. The protein resides in the chromosome. The catalysed reaction is a 5-methyl-2'-deoxycytidine in DNA + 2-oxoglutarate + O2 = a 5-hydroxymethyl-2'-deoxycytidine in DNA + succinate + CO2. It carries out the reaction a 5-hydroxymethyl-2'-deoxycytidine in DNA + 2-oxoglutarate + O2 = a 5-formyl-2'-deoxycytidine in DNA + succinate + CO2 + H2O. The enzyme catalyses a 5-formyl-2'-deoxycytidine in DNA + 2-oxoglutarate + O2 = a 5-carboxyl-2'-deoxycytidine in DNA + succinate + CO2 + H(+). In terms of biological role, dioxygenase that catalyzes the conversion of the modified genomic base 5-methylcytosine (5mC) into 5-hydroxymethylcytosine (5hmC) and plays a key role in epigenetic chromatin reprogramming during embryonic development. Conversion of 5mC into 5hmC probably constitutes the first step in cytosine demethylation. Selectively binds to the promoter region of target genes and contributes to regulate the expression of numerous developmental genes, including pax6, rax, sox9 and six3. May also contribute to the regulation of target genes in ways that do not require its enzyme activity. The chain is Methylcytosine dioxygenase tet3 from Xenopus tropicalis (Western clawed frog).